A 216-amino-acid chain; its full sequence is Probable nicotinate-nucleotide adenylyltransferase (216 aa).

The protein belongs to the NadD family.

It catalyses the reaction nicotinate beta-D-ribonucleotide + ATP + H(+) = deamido-NAD(+) + diphosphate. It functions in the pathway cofactor biosynthesis; NAD(+) biosynthesis; deamido-NAD(+) from nicotinate D-ribonucleotide: step 1/1. Its function is as follows. Catalyzes the reversible adenylation of nicotinate mononucleotide (NaMN) to nicotinic acid adenine dinucleotide (NaAD). This is Probable nicotinate-nucleotide adenylyltransferase from Klebsiella pneumoniae subsp. pneumoniae (strain ATCC 700721 / MGH 78578).